The primary structure comprises 200 residues: MTRLILATRNAGKITELRAILADAGLPHDLVGADAYPHIPDVKETGVTFAENALLKAHALAEATGLPAVADDSGLCVDVLNGAPGIFSARWAGRHGDDQANLDLLLAQIADIADEHRGAHFACAAALALPDGTERVVEGQLKGTLRHAPAGTGGFGYDPILQPEGETRTCAELTAEEKNAISHRGKAFRALVPVVRELLG.

8-13 (TRNAGK) contributes to the substrate binding site. The Proton acceptor role is filled by Asp-72. Residue Asp-72 coordinates Mg(2+). Residues Ser-73, 155–158 (FGYD), Lys-178, and 183–184 (HR) each bind substrate.

Belongs to the HAM1 NTPase family. In terms of assembly, homodimer. Mg(2+) is required as a cofactor.

It carries out the reaction XTP + H2O = XMP + diphosphate + H(+). The enzyme catalyses dITP + H2O = dIMP + diphosphate + H(+). The catalysed reaction is ITP + H2O = IMP + diphosphate + H(+). Its function is as follows. Pyrophosphatase that catalyzes the hydrolysis of nucleoside triphosphates to their monophosphate derivatives, with a high preference for the non-canonical purine nucleotides XTP (xanthosine triphosphate), dITP (deoxyinosine triphosphate) and ITP. Seems to function as a house-cleaning enzyme that removes non-canonical purine nucleotides from the nucleotide pool, thus preventing their incorporation into DNA/RNA and avoiding chromosomal lesions. This Streptomyces coelicolor (strain ATCC BAA-471 / A3(2) / M145) protein is dITP/XTP pyrophosphatase.